The sequence spans 189 residues: Protein GrpE (189 aa).

Residues 1 to 13 (MSENKQPEQNQDL) show a composition bias toward polar residues. Positions 1 to 35 (MSENKQPEQNQDLTGEPSPEELEAAQAADEFDAMN) are disordered.

The protein belongs to the GrpE family. As to quaternary structure, homodimer.

It localises to the cytoplasm. In terms of biological role, participates actively in the response to hyperosmotic and heat shock by preventing the aggregation of stress-denatured proteins, in association with DnaK and GrpE. It is the nucleotide exchange factor for DnaK and may function as a thermosensor. Unfolded proteins bind initially to DnaJ; upon interaction with the DnaJ-bound protein, DnaK hydrolyzes its bound ATP, resulting in the formation of a stable complex. GrpE releases ADP from DnaK; ATP binding to DnaK triggers the release of the substrate protein, thus completing the reaction cycle. Several rounds of ATP-dependent interactions between DnaJ, DnaK and GrpE are required for fully efficient folding. This is Protein GrpE from Polaromonas naphthalenivorans (strain CJ2).